A 307-amino-acid chain; its full sequence is Epimerase family protein ML0860 (307 aa).

It belongs to the NAD(P)-dependent epimerase/dehydratase family. SDR39U1 subfamily.

In Mycobacterium leprae (strain TN), this protein is Epimerase family protein ML0860.